A 266-amino-acid polypeptide reads, in one-letter code: tRNA pseudouridine synthase A (266 aa).

D55 serves as the catalytic Nucleophile. Position 110 (Y110) interacts with substrate.

It belongs to the tRNA pseudouridine synthase TruA family.

The catalysed reaction is uridine(38/39/40) in tRNA = pseudouridine(38/39/40) in tRNA. Functionally, formation of pseudouridine at positions 38, 39 and 40 in the anticodon stem and loop of transfer RNAs. This chain is tRNA pseudouridine synthase A, found in Thermococcus sibiricus (strain DSM 12597 / MM 739).